Here is a 416-residue protein sequence, read N- to C-terminus: (S)-ureidoglycine--glyoxylate transaminase (416 aa).

K198 is modified (N6-(pyridoxal phosphate)lysine).

It belongs to the class-V pyridoxal-phosphate-dependent aminotransferase family. In terms of assembly, homodimer. It depends on pyridoxal 5'-phosphate as a cofactor.

The catalysed reaction is (S)-2-ureidoglycine + glyoxylate = N-carbamoyl-2-oxoglycine + glycine. It participates in nitrogen metabolism; (S)-allantoin degradation. Catalyzes the transamination between an unstable intermediate ((S)-ureidoglycine) and the end product of purine catabolism (glyoxylate) to yield oxalurate and glycine. Glyoxylate is the preferred substrate, but other amino-group acceptors can be used. This chain is (S)-ureidoglycine--glyoxylate transaminase, found in Bacillus subtilis (strain 168).